Reading from the N-terminus, the 229-residue chain is Transcriptional activator protein IrlR (229 aa).

The Response regulatory domain occupies 2–115 (RILIVEDEPK…ELVARVRSIL (114 aa)). Asp-51 carries the 4-aspartylphosphate modification. A DNA-binding region (ompR/PhoB-type) is located at residues 123-221 (STVLRIADLE…VRGMGYVLEV (99 aa)).

Post-translationally, phosphorylated by IrlS.

In terms of biological role, member of the two-component regulatory system IrlR/IrlS. May be involved in invasion of eukaryotic cells and heavy-metal resistance. The sequence is that of Transcriptional activator protein IrlR (irlR) from Burkholderia pseudomallei (strain 1026b).